Here is a 75-residue protein sequence, read N- to C-terminus: Vacuolar ATPase assembly integral membrane protein VMA21 (75 aa).

Residues 1–8 (MPVDVAPG) lie on the Cytoplasmic side of the membrane. A helical membrane pass occupies residues 9 to 29 (VIKKLMFFTAAMVICPLLTFF). At 30–41 (SIKQFTTNTIVS) the chain is on the lumenal side. The chain crosses the membrane as a helical span at residues 42–62 (GGLAALAANLVLIGYIVVAFM). The Cytoplasmic portion of the chain corresponds to 63–75 (EDTTDVKAESKKD).

The protein belongs to the VMA21 family.

The protein resides in the endoplasmic reticulum membrane. It is found in the endoplasmic reticulum-Golgi intermediate compartment membrane. Its subcellular location is the cytoplasmic vesicle. The protein localises to the COPII-coated vesicle membrane. Functionally, required for the assembly of the V0 complex of the vacuolar ATPase (V-ATPase) in the endoplasmic reticulum. The protein is Vacuolar ATPase assembly integral membrane protein VMA21 of Vanderwaltozyma polyspora (strain ATCC 22028 / DSM 70294 / BCRC 21397 / CBS 2163 / NBRC 10782 / NRRL Y-8283 / UCD 57-17) (Kluyveromyces polysporus).